The chain runs to 617 residues: MKAGTYKVKAKGHGSSFMPMEVTLSDDAIQRIQVDASGETSGIADEVFKRLPAKIVKGQTLNVDTVAGATISSRGVVGGVAEAITLAGGDADEWKQRAKPEIATQAAQVEEYQTDVVVVGAGGAGLAAATRSLQHDKQVVILEKFPQLGGNTTRAGGPMNAADPDWQRDFAALTGEKETLKRLANTPLEQIDPEYRADFERLREQIKEYIASGAQYLFDSNLLHEIQTYLGGKREDLAGHEIHGRYQLVKTLVDNALDSVKWLADLGVKFDQTDVTMPVGALWRRGHKPVEPMGYAFIHVLGDWVTEHGATILTETRAEHLLMENGRVVGVVAHKTDGTKVTVRAKSTFLTAGGFGANTPMVQKYNTYWEHIDDDIATTNSPAITGDGISLGQEAGAELTGMGFIQLMPVSDPVTGELFTGLQTPPGNFIMVNQEGKRFVNEFAERDTLAAAAIAQGGLFYLIADDKIKETAYNTTQESIDAQVEAGTLFKADTLAELAGKVGMDPATLEDTINKYNSYVDAGHDPEFGKSASHLKCEVAPFYATPRKPAIHHTMGGLAIDKHGHVLDKAERVIAGLYSAGENAGGLHAGNRLGGNSLADIFTFGRLAADTAAQENG.

Position 70 is an FMN phosphoryl threonine (T70). Residues A124, E143, N151, T152, G156, G157, and D387 each coordinate FAD. Catalysis depends on R446, which acts as the Proton donor. Residues H553, E582, and L598 each contribute to the FAD site.

This sequence belongs to the FAD-dependent oxidoreductase 2 family. FRD/SDH subfamily. Requires FAD as cofactor. The cofactor is FMN.

It catalyses the reaction dihydrourocanate + A = urocanate + AH2. Functionally, catalyzes the two-electron reduction of urocanate to dihydrourocanate (also named imidazole propionate or deamino-histidine). Dihydrourocanate is present at higher concentrations in subjects with type 2 diabetes, and directly impairs glucose tolerance and insulin signaling at the level of insulin receptor substrate (IRS) through activation of p38 gamma (MAPK12)-p62-mTORC1. Therefore, the UrdA enzyme from the gut bacteria L.fermentum strain NBRC 3956 may contribute to the pathogenesis of type 2 diabetes by producing the microbial metabolite dihydrourocanate. The chain is Urocanate reductase from Limosilactobacillus fermentum (strain NBRC 3956 / LMG 18251) (Lactobacillus fermentum).